Here is a 385-residue protein sequence, read N- to C-terminus: Glucans biosynthesis protein C (385 aa).

The next 10 membrane-spanning stretches (helical) occupy residues 17–39, 54–76, 88–110, 136–158, 179–198, 213–235, 242–261, 276–295, 308–330, and 334–356; these read AWLMLLGIPFHISLIYSSHTWHV, FIHSFRMQVFFVISGYFSYMLFL, VERVGIPMLTAIPLLTLPQFIML, LISHLWFLLVLVVMTTLCVWIFK, LSVIFLCLGIGYAVIRRTIF, IVMQTLFYLPFFILGALAFIFPH, TPSRGCTLAAALAFVAYLLN, SVITMVLGLWMVNVVFSFGH, FVNASLFIYLVHHPLTLFFGAYI, and ITSNWLGFLCGLIFVVGIAIILY.

It belongs to the acyltransferase 3 family. OpgC subfamily.

It is found in the cell membrane. It participates in glycan metabolism; osmoregulated periplasmic glucan (OPG) biosynthesis. Functionally, necessary for the succinyl substitution of periplasmic glucans. Could catalyze the transfer of succinyl residues from the cytoplasmic side of the membrane to the nascent glucan backbones on the periplasmic side of the membrane. The protein is Glucans biosynthesis protein C of Escherichia coli O157:H7.